The primary structure comprises 651 residues: Coiled-coil domain-containing protein 81 (651 aa).

The segment at 194–314 is disordered; that stretch reads LSSRESFGKR…PKTSPAPACQ (121 aa). Position 206 is a phosphoserine (S206). Basic and acidic residues-rich tracts occupy residues 212 to 222 and 232 to 250; these read RIEHKETENKP and GENRPRKSKLKDQSDKEEG. Over residues 265–275 the composition is skewed to polar residues; sequence SISPAKVTSGS. Phosphoserine occurs at positions 273, 275, 294, and 416. Coiled coils occupy residues 428-465 and 539-566; these read SQSLLKQMESKREKEIKQRQNRELMDRLEQVQLTEELA and KRNTILNQLVDQRRDLQMLQRTKREHLA.

Its subcellular location is the cytoplasm. The protein localises to the cytoskeleton. It is found in the microtubule organizing center. It localises to the centrosome. The protein is Coiled-coil domain-containing protein 81 (Ccdc81) of Rattus norvegicus (Rat).